Consider the following 3082-residue polypeptide: Autotransporter adhesin BadA (3082 aa).

The signal sequence occupies residues 1 to 47 (MKKLSVTSKRQYNLYASPISRRLSLLMKLSLETVTVMFLLGASPVLA). A binds to host cells region spans residues 48–376 (SNLALTGAKN…DAVNVAQLKA (329 aa)). The interval 48 to 2901 (SNLALTGAKN…KVQDIATVAD (2854 aa)) is surface exposed passenger domain. Positions 53-2850 (TGAKNLSQNS…DARHNGVDSK (2798 aa)) are does not bind host cells, no host proangiogenic cytokine induction, collagen or fibronectin, no autoagglutination. The required to bind fibronectin, not required for surface expression on bacteria, bacterial autoagglutination, host cell binding, collagen binding or host proangiogenic cytokine induction stretch occupies residues 470 to 2850 (ITGVAEGTDA…DARHNGVDSK (2381 aa)). The outer membrane translocation of the passenger domain stretch occupies residues 2902 to 3027 (SAVKYEKDST…VSNLRYYDIP (126 aa)). Transmembrane regions (beta stranded) follow at residues 3028–3039 (GSLSLSFGTGIW), 3044–3051 (AFAIGAGY), 3055–3065 (DGNIRSNLSIT), and 3070–3082 (QWGV…LRLK). A translocator domain region spans residues 3028 to 3082 (GSLSLSFGTGIWRSQSAFAIGAGYTSEDGNIRSNLSITSSGGQWGVGAGITLRLK).

The protein belongs to the autotransporter-2 (AT-2) (TC 1.B.40) family. In terms of assembly, homotrimer. Crystals of the head region form trimers.

It is found in the cell surface. The protein localises to the cell outer membrane. In terms of biological role, mediates bacterial adherence to host endothelial cells and host extracellular matrix proteins (collagen type I, III, IV, laminin and fibronectin). Static versus dynamic adherence results differ slightly; in dynamic adherence studies bacteria bind to fixed components under a constant defined flow rate to simulate in vivo infection conditions. Induces secretion of host proangiogenic cytokines such as VEGFA, ADM, IGFBP-3 and IL-8. May prevent bacterial phagocytosis by macrophages. Probably mediates bacterial autoagglutination. Negatively impacts type IV secretion system effectors (VirB/D4 T4SS and its substrate Bep proteins), possibly by preventing close association of host and bacterial cells. This implies the 2 factors are expressed at different times during infection. This Bartonella henselae (Rochalimaea henselae) protein is Autotransporter adhesin BadA.